Reading from the N-terminus, the 186-residue chain is Protein GrpE (186 aa).

Residues 1–13 (MSENTQPEQNQPL) show a composition bias toward polar residues. The disordered stretch occupies residues 1–22 (MSENTQPEQNQPLTGAPSPEEL).

Belongs to the GrpE family. As to quaternary structure, homodimer.

It is found in the cytoplasm. Participates actively in the response to hyperosmotic and heat shock by preventing the aggregation of stress-denatured proteins, in association with DnaK and GrpE. It is the nucleotide exchange factor for DnaK and may function as a thermosensor. Unfolded proteins bind initially to DnaJ; upon interaction with the DnaJ-bound protein, DnaK hydrolyzes its bound ATP, resulting in the formation of a stable complex. GrpE releases ADP from DnaK; ATP binding to DnaK triggers the release of the substrate protein, thus completing the reaction cycle. Several rounds of ATP-dependent interactions between DnaJ, DnaK and GrpE are required for fully efficient folding. The chain is Protein GrpE from Polaromonas sp. (strain JS666 / ATCC BAA-500).